We begin with the raw amino-acid sequence, 303 residues long: Porphobilinogen deaminase (303 aa).

Cysteine 240 is subject to S-(dipyrrolylmethanemethyl)cysteine.

The protein belongs to the HMBS family. In terms of assembly, monomer. Requires dipyrromethane as cofactor.

The catalysed reaction is 4 porphobilinogen + H2O = hydroxymethylbilane + 4 NH4(+). It functions in the pathway porphyrin-containing compound metabolism; protoporphyrin-IX biosynthesis; coproporphyrinogen-III from 5-aminolevulinate: step 2/4. In terms of biological role, tetrapolymerization of the monopyrrole PBG into the hydroxymethylbilane pre-uroporphyrinogen in several discrete steps. The polypeptide is Porphobilinogen deaminase (Stenotrophomonas maltophilia (strain K279a)).